Consider the following 947-residue polypeptide: ATP-dependent RNA helicase DDX42 (947 aa).

The segment covering 1-18 (MNWNKGGSGNKRGFGFGG) has biased composition (gly residues). Disordered stretches follow at residues 1–54 (MNWN…NQLP), 68–114 (EENS…PLEA), and 176–200 (NLEY…LPPI). The span at 34-54 (VSHSAFQSASSKYGSTSNQLP) shows a compositional bias: polar residues. A compositionally biased stretch (acidic residues) spans 68-81 (EENSYFDDEEEDSS). A coiled-coil region spans residues 112-152 (LEAFMAEVEDQAAKDMRKLEERDKEKANARGIRDDIEEEDD). The Q motif signature appears at 250–278 (SSFAHFGFDEQLLHQIRKSEYTQPTPIQC). Residues 281-456 (IPVALSGRDM…RDILVDPIRV (176 aa)) enclose the Helicase ATP-binding domain. An ATP-binding site is contributed by 294–301 (AKTGSGKT). A DEAD box motif is present at residues 404–407 (DEAD). Residues 484–629 (WLTRRLVEFT…YVSKELLDLA (146 aa)) form the Helicase C-terminal domain. Disordered stretches follow at residues 731 to 754 (SAGS…EAAP) and 797 to 947 (GASA…RWDS). Residues 805-929 (GGRERHSDSK…RKEGTREAKT (125 aa)) are compositionally biased toward basic and acidic residues. A compositionally biased stretch (basic residues) spans 938–947 (PKRKKSRWDS).

The protein belongs to the DEAD box helicase family. DDX42 subfamily. In terms of assembly, transient component of the SF3B subcomplex of the 17S U2 SnRNP complex.

Its subcellular location is the cytoplasm. The protein localises to the nucleus. The catalysed reaction is ATP + H2O = ADP + phosphate + H(+). Its function is as follows. ATP-dependent RNA helicase that binds to partially double-stranded RNAs (dsRNAs) in order to unwind RNA secondary structures. Unwinding is promoted in the presence of single-strand binding proteins. Also mediates RNA duplex formation thereby displacing the single-strand RNA binding protein. ATP and ADP modulate its activity: ATP binding and hydrolysis by DDX42 triggers RNA strand separation, whereas the ADP-bound form of the protein triggers annealing of complementary RNA strands. Required for assembly of the 17S U2 SnRNP complex of the spliceosome, a large ribonucleoprotein complex that removes introns from transcribed pre-mRNAs: DDX42 associates transiently with the SF3B subcomplex of the 17S U2 SnRNP complex and is released after fulfilling its role in the assembly of 17S U2 SnRNP. The chain is ATP-dependent RNA helicase DDX42 (ddx42) from Xenopus laevis (African clawed frog).